Here is an 81-residue protein sequence, read N- to C-terminus: Putative membrane protein insertion efficiency factor (81 aa).

A disordered region spans residues 61-81 (NDGGFDPVPPAPSSRTSSIAE).

The protein belongs to the UPF0161 family.

Its subcellular location is the cell inner membrane. Functionally, could be involved in insertion of integral membrane proteins into the membrane. The protein is Putative membrane protein insertion efficiency factor of Pseudomonas entomophila (strain L48).